A 145-amino-acid polypeptide reads, in one-letter code: MGKKSEKKVVEETMEVDEQPAVEPEAVPEEEPEVEDEDLNVPKKKKMEILDPKSFEQDPSNLTLILYEEDHTIGNSIKHILSRMDEVEFCGYNVPHPLEDKILFRVQTKDGINALEVLVKAFESVEQVFSTIRGKFEAAYEKSIA.

Positions 1 to 52 (MGKKSEKKVVEETMEVDEQPAVEPEAVPEEEPEVEDEDLNVPKKKKMEILDP) are disordered. Acidic residues predominate over residues 12-39 (ETMEVDEQPAVEPEAVPEEEPEVEDEDL).

It belongs to the archaeal Rpo11/eukaryotic RPB11/RPC19 RNA polymerase subunit family. In terms of assembly, component of the RNA polymerase I (Pol I) and RNA polymerase III (Pol III) complexes consisting of at least 13 and 17 subunits, respectively.

It is found in the nucleus. In terms of biological role, DNA-dependent RNA polymerase catalyzes the transcription of DNA into RNA using the four ribonucleoside triphosphates as substrates. Common core component of RNA polymerases I and III which synthesize ribosomal RNA precursors and small RNAs, such as 5S rRNA and tRNAs, respectively. The sequence is that of Probable DNA-directed RNA polymerases I and III subunit RPAC2 (rpac-19) from Caenorhabditis briggsae.